Consider the following 132-residue polypeptide: Ribosome-binding factor A (132 aa).

This sequence belongs to the RbfA family. As to quaternary structure, monomer. Binds 30S ribosomal subunits, but not 50S ribosomal subunits or 70S ribosomes.

The protein resides in the cytoplasm. Functionally, one of several proteins that assist in the late maturation steps of the functional core of the 30S ribosomal subunit. Associates with free 30S ribosomal subunits (but not with 30S subunits that are part of 70S ribosomes or polysomes). Required for efficient processing of 16S rRNA. May interact with the 5'-terminal helix region of 16S rRNA. This is Ribosome-binding factor A from Burkholderia lata (strain ATCC 17760 / DSM 23089 / LMG 22485 / NCIMB 9086 / R18194 / 383).